The following is a 544-amino-acid chain: Chaperonin GroEL (544 aa).

ATP contacts are provided by residues 30–33 (TLGP), 87–91 (DGTTT), glycine 414, 478–480 (NAL), and aspartate 494.

Belongs to the chaperonin (HSP60) family. In terms of assembly, forms a cylinder of 14 subunits composed of two heptameric rings stacked back-to-back. Interacts with the co-chaperonin GroES.

It localises to the cytoplasm. The enzyme catalyses ATP + H2O + a folded polypeptide = ADP + phosphate + an unfolded polypeptide.. In terms of biological role, together with its co-chaperonin GroES, plays an essential role in assisting protein folding. The GroEL-GroES system forms a nano-cage that allows encapsulation of the non-native substrate proteins and provides a physical environment optimized to promote and accelerate protein folding. This Pelotomaculum thermopropionicum (strain DSM 13744 / JCM 10971 / SI) protein is Chaperonin GroEL.